The sequence spans 969 residues: RNA polymerase-associated protein RapA (969 aa).

Residues E164–D334 form the Helicase ATP-binding domain. Residue D177–T184 coordinates ATP. A DEAH box motif is present at residues D280–H283. The Helicase C-terminal domain occupies R492 to D646.

It belongs to the SNF2/RAD54 helicase family. RapA subfamily. In terms of assembly, interacts with the RNAP. Has a higher affinity for the core RNAP than for the holoenzyme. Its ATPase activity is stimulated by binding to RNAP.

Functionally, transcription regulator that activates transcription by stimulating RNA polymerase (RNAP) recycling in case of stress conditions such as supercoiled DNA or high salt concentrations. Probably acts by releasing the RNAP, when it is trapped or immobilized on tightly supercoiled DNA. Does not activate transcription on linear DNA. Probably not involved in DNA repair. The polypeptide is RNA polymerase-associated protein RapA (Vibrio campbellii (strain ATCC BAA-1116)).